A 414-amino-acid chain; its full sequence is ATP-dependent Clp protease ATP-binding subunit ClpX (414 aa).

The 51-residue stretch at 1-51 folds into the ClpX-type ZB domain; it reads MADSKTKKKCSFCGRSENEVGFLITGMNGYICDSCATQAYEITQEALGEGR. The Zn(2+) site is built by cysteine 10, cysteine 13, cysteine 32, and cysteine 35. 120 to 127 is a binding site for ATP; that stretch reads STGTGKTL.

Belongs to the ClpX chaperone family. Component of the ClpX-ClpP complex. Forms a hexameric ring that, in the presence of ATP, binds to fourteen ClpP subunits assembled into a disk-like structure with a central cavity, resembling the structure of eukaryotic proteasomes.

In terms of biological role, ATP-dependent specificity component of the Clp protease. It directs the protease to specific substrates. Can perform chaperone functions in the absence of ClpP. This Bacteroides thetaiotaomicron (strain ATCC 29148 / DSM 2079 / JCM 5827 / CCUG 10774 / NCTC 10582 / VPI-5482 / E50) protein is ATP-dependent Clp protease ATP-binding subunit ClpX.